Here is a 466-residue protein sequence, read N- to C-terminus: MADHFDLIVLGGGPGGYVAAIRAAQLNLKVALVERVHLGGICLNWGCIPTKSLLRSAEVYHEMQNAEAYGLTSFKPDFDLDKIIARSREVATRLASGVKTLLRKNKVEVISGVGQLTGNQQMLVETTEGEEKILEAKDIIIATGARARQLPNVHSDGKHIWTYHHALKPPAMPKKLLVIGSGAIGIEFASFYADFGAEVSIVEHAPQILPMEDAEVSAYVAKAFKKRGIRILTQSALQNLTPDDEGVTAEIAGADGKVTKERFSHAIVAIGVVANVENIGLDKLGIKLDRGFIAVDGFGRTNVDHVWAIGDVAGAPCLAHKASHQGVIAAEAIAGCDHVHPLNTQNIPGCTYARPQVASVGLTEEKARQQGYNVKIGNFPFIANGKAIAQGATDGFVKTVFDADSGALLGAHMVGAEVTEMIQGYTVARTLETTEAEIMETIFPHPTLSEAMHESVLAAYGRALHF.

Residues 34 to 42 (ERVHLGGIC), Lys-51, and Gly-114 each bind FAD. A disulfide bond links Cys-42 and Cys-47. Residues 180-184 (GSGAI), Glu-203, and 269-272 (AIGV) contribute to the NAD(+) site. Asp-311 and Ala-319 together coordinate FAD. Residue His-445 is the Proton acceptor of the active site.

This sequence belongs to the class-I pyridine nucleotide-disulfide oxidoreductase family. In terms of assembly, homodimer. Requires FAD as cofactor.

Its subcellular location is the cytoplasm. The enzyme catalyses N(6)-[(R)-dihydrolipoyl]-L-lysyl-[protein] + NAD(+) = N(6)-[(R)-lipoyl]-L-lysyl-[protein] + NADH + H(+). Lipoamide dehydrogenase is a component of the alpha-ketoacid dehydrogenase complexes. The polypeptide is Dihydrolipoyl dehydrogenase (lpd) (Zymomonas mobilis subsp. mobilis (strain ATCC 31821 / ZM4 / CP4)).